Reading from the N-terminus, the 137-residue chain is Large ribosomal subunit protein uL16c (137 aa).

Residues 1–21 are disordered; the sequence is MLSPKKTKYRKQHRGRMKGKA.

This sequence belongs to the universal ribosomal protein uL16 family. In terms of assembly, part of the 50S ribosomal subunit.

The protein localises to the plastid. The protein resides in the chloroplast. This chain is Large ribosomal subunit protein uL16c, found in Oedogonium cardiacum (Filamentous green alga).